The chain runs to 139 residues: Prefoldin subunit alpha (139 aa).

It belongs to the prefoldin subunit alpha family. As to quaternary structure, heterohexamer of two alpha and four beta subunits.

The protein localises to the cytoplasm. Functionally, molecular chaperone capable of stabilizing a range of proteins. Seems to fulfill an ATP-independent, HSP70-like function in archaeal de novo protein folding. This Picrophilus torridus (strain ATCC 700027 / DSM 9790 / JCM 10055 / NBRC 100828 / KAW 2/3) protein is Prefoldin subunit alpha.